A 354-amino-acid chain; its full sequence is Holliday junction branch migration complex subunit RuvB (354 aa).

The interval 4 to 191 is large ATPase domain (RuvB-L); it reads TDKLAAPARV…FGIVARLEFY (188 aa). ATP is bound by residues L30, R31, G72, K75, T76, T77, 138–140, R181, Y191, and R228; that span reads EDY. T76 contacts Mg(2+). Positions 192–262 are small ATPAse domain (RuvB-S); the sequence is TAEELARIVT…MADAALAMLD (71 aa). The segment at 265 to 354 is head domain (RuvB-H); the sequence is RVGFDLMDRK…GDAGELFGDA (90 aa). Residues R301, R320, and R325 each coordinate DNA.

This sequence belongs to the RuvB family. In terms of assembly, homohexamer. Forms an RuvA(8)-RuvB(12)-Holliday junction (HJ) complex. HJ DNA is sandwiched between 2 RuvA tetramers; dsDNA enters through RuvA and exits via RuvB. An RuvB hexamer assembles on each DNA strand where it exits the tetramer. Each RuvB hexamer is contacted by two RuvA subunits (via domain III) on 2 adjacent RuvB subunits; this complex drives branch migration. In the full resolvosome a probable DNA-RuvA(4)-RuvB(12)-RuvC(2) complex forms which resolves the HJ.

It is found in the cytoplasm. It catalyses the reaction ATP + H2O = ADP + phosphate + H(+). Its function is as follows. The RuvA-RuvB-RuvC complex processes Holliday junction (HJ) DNA during genetic recombination and DNA repair, while the RuvA-RuvB complex plays an important role in the rescue of blocked DNA replication forks via replication fork reversal (RFR). RuvA specifically binds to HJ cruciform DNA, conferring on it an open structure. The RuvB hexamer acts as an ATP-dependent pump, pulling dsDNA into and through the RuvAB complex. RuvB forms 2 homohexamers on either side of HJ DNA bound by 1 or 2 RuvA tetramers; 4 subunits per hexamer contact DNA at a time. Coordinated motions by a converter formed by DNA-disengaged RuvB subunits stimulates ATP hydrolysis and nucleotide exchange. Immobilization of the converter enables RuvB to convert the ATP-contained energy into a lever motion, pulling 2 nucleotides of DNA out of the RuvA tetramer per ATP hydrolyzed, thus driving DNA branch migration. The RuvB motors rotate together with the DNA substrate, which together with the progressing nucleotide cycle form the mechanistic basis for DNA recombination by continuous HJ branch migration. Branch migration allows RuvC to scan DNA until it finds its consensus sequence, where it cleaves and resolves cruciform DNA. The sequence is that of Holliday junction branch migration complex subunit RuvB from Cupriavidus taiwanensis (strain DSM 17343 / BCRC 17206 / CCUG 44338 / CIP 107171 / LMG 19424 / R1) (Ralstonia taiwanensis (strain LMG 19424)).